The chain runs to 477 residues: MALRLFNTMSHQKEEFKPREEGKVGMYTCGPTVYNYFHVGNGRMLVVFDMIRRYLLYKGYDVTFVQNFTDIDDKIIKRGQEEGRDPLELAQDYIGEYFKDAAALNLMPASIHPKATDHIPEMIEIIKGLEEQGLAYAVDGDVYFAVDKLPAYGKLSGRTLEDMQAGARVEVGERKQNPMDFALWKNAKPGEPFWESPWGKGRPGWHIECSAMSLKYLGSGFDIHGGGGDLVFPHHENEIAQAEGYLHGETFARYWMHNAFLTINQQKMSKSLGNFFTVREILEHFPGEVIRFYLLGTHYRSPLDFDDENLQMAQKGLERLQTSIRLADEALGRQGQNSADAASGQKLRAAAEEARREFAEAMDDDFNSALAYASLFELGKAINAHVQAYPYSSEGLLKARATLWELADVLGFDLAKPANQAEAGNQKLDQVMELLLEVRAIARKKKDWEMSDLIRDRLKDLGIVLEDTPQGARWTLK.

Residue cysteine 29 coordinates Zn(2+). A 'HIGH' region motif is present at residues proline 31–asparagine 41. Residues cysteine 209, histidine 234, and glutamate 238 each contribute to the Zn(2+) site. The 'KMSKS' region motif lies at lysine 267–serine 271. Lysine 270 provides a ligand contact to ATP.

This sequence belongs to the class-I aminoacyl-tRNA synthetase family. Monomer. Zn(2+) is required as a cofactor.

The protein resides in the cytoplasm. It catalyses the reaction tRNA(Cys) + L-cysteine + ATP = L-cysteinyl-tRNA(Cys) + AMP + diphosphate. The sequence is that of Cysteine--tRNA ligase from Desulfitobacterium hafniense (strain DSM 10664 / DCB-2).